The primary structure comprises 284 residues: MIQTITDLSALRALVTGWKREGLRVALVPTMGNLHAGHYSLVMLARQYADRVVSSVFVNPTQFGPNEDFARYPRTPEADMRGLEDAGCDALWLPDVDTMYPLGTALATPIHAPGVSDVLEGVCRPGHFDGVCTVVARLFNQVQPDVAAFGKKDYQQLAVIRQMVADLAFPIEILGGSIVREADGLAMSSRNQYLSADDRPISAQIRKVLLQMRDSHAAGVPRLQVEAAATQALEAVGFRVDYTALRLPDLSEPDDGASNPAAGPRVALIAARIGSTRLIDNLEF.

31–38 (MGNLHAGH) serves as a coordination point for ATP. His38 acts as the Proton donor in catalysis. Gln62 is a (R)-pantoate binding site. Residue Gln62 participates in beta-alanine binding. An ATP-binding site is contributed by 150-153 (GKKD). Gln156 serves as a coordination point for (R)-pantoate. Residues Val179 and 187 to 190 (MSSR) each bind ATP.

It belongs to the pantothenate synthetase family. As to quaternary structure, homodimer.

It is found in the cytoplasm. The enzyme catalyses (R)-pantoate + beta-alanine + ATP = (R)-pantothenate + AMP + diphosphate + H(+). Its pathway is cofactor biosynthesis; (R)-pantothenate biosynthesis; (R)-pantothenate from (R)-pantoate and beta-alanine: step 1/1. In terms of biological role, catalyzes the condensation of pantoate with beta-alanine in an ATP-dependent reaction via a pantoyl-adenylate intermediate. This is Pantothenate synthetase from Xanthomonas campestris pv. campestris (strain 8004).